We begin with the raw amino-acid sequence, 241 residues long: Carboxysome assembly protein CcmN (241 aa).

The interval 123–206 (GASSPTTDSV…PTAPTVVTTA (84 aa)) is disordered. Polar residues predominate over residues 185 to 195 (QISSNRSPGES). Residues 196 to 206 (TPTAPTVVTTA) are compositionally biased toward low complexity. The Encapsulation peptide motif lies at 219-241 (VVGQVYINQLLLTLFPERRYFSS).

It belongs to the CcmN family. Interacts with full-length and the N-terminal 249 residues of CcmM; a probable CcmM-CcaA-CcmN complex can also be isolated. Interacts with CcmK.

It is found in the carboxysome. In terms of biological role, required for carboxysome formation; the N-terminus interacts with CcmM which itself binds RuBisCO (ribulose bisphosphate carboxylase, rbcL-rbcS). May also contact shell protein CcmK to help assemble the carboxysome. Its function is as follows. Beta-carboxysome assembly initiates when soluble RuBisCO is condensed into a liquid matrix in a pre-carboxysome by the RbcS-like domains of probably both forms of CcmM. CcmN interacts with the N-terminus of full-length CcmM, and then recruits the CcmK major shell protein via CcmN's encapsulation peptide. Shell formation requires CcmK proteins and CcmO. CcmL caps the otherwise elongated carboxysome. Once fully encapsulated carboxysomes are formed, they migrate within the cell probably via interactions with the cytoskeleton. This Synechocystis sp. (strain ATCC 27184 / PCC 6803 / Kazusa) protein is Carboxysome assembly protein CcmN.